Consider the following 1151-residue polypeptide: Protein kinase C-like 1 (1151 aa).

REM-1 domains lie at 1 to 67 (MSFS…KTAQ) and 106 to 183 (KYDC…INVD). The segment at 64–88 (KTAQQSQGENGSEDNERCNSKEYGF) is disordered. The region spanning 190–309 (QPNDIMDNQQ…IRKKKAGQTN (120 aa)) is the C2 domain. At serine 226 the chain carries Phosphoserine. The tract at residues 306–331 (GQTNEQQGWVNASNINGGSSLASEEG) is disordered. 2 consecutive Phorbol-ester/DAG-type zinc fingers follow at residues 414–461 (GHHF…VTKC) and 481–531 (PHRF…PDFC). Disordered stretches follow at residues 546–620 (QDTK…IIDK) and 649–669 (AQQT…SNRR). Polar residues predominate over residues 560 to 577 (PSAQLGSSIGTANGSDLS). Positions 605–620 (VGRDSPTKQHDPIIDK) are enriched in basic and acidic residues. Serine 761 is modified (phosphoserine). The interval 782 to 816 (LAPTSTHASRTTDQQSPQKSQTSTSAKHKKRAAKR) is disordered. Over residues 792-806 (TTDQQSPQKSQTSTS) the composition is skewed to low complexity. The segment covering 807-816 (AKHKKRAAKR) has biased composition (basic residues). The Protein kinase domain occupies 824-1083 (FVLLKVLGKG…ADEVMEEPFF (260 aa)). ATP is bound by residues 830–838 (LGKGNFGKV) and lysine 853. The active-site Proton acceptor is the aspartate 949. An AGC-kinase C-terminal domain is found at 1084-1151 (RNINFDDILN…FSFMPDDLDL (68 aa)).

Belongs to the protein kinase superfamily. AGC Ser/Thr protein kinase family. PKC subfamily.

It carries out the reaction L-seryl-[protein] + ATP = O-phospho-L-seryl-[protein] + ADP + H(+). The enzyme catalyses L-threonyl-[protein] + ATP = O-phospho-L-threonyl-[protein] + ADP + H(+). Functionally, required for cell growth and for the G2-&gt;M transition of the cell division cycle. Mediates a protein kinase cascade; it activates BCK1 which itself activates MKK1/MKK2. The polypeptide is Protein kinase C-like 1 (PKC1) (Saccharomyces cerevisiae (strain ATCC 204508 / S288c) (Baker's yeast)).